A 426-amino-acid polypeptide reads, in one-letter code: 3-phosphoshikimate 1-carboxyvinyltransferase (426 aa).

Residues Lys-22, Ser-23, and Arg-27 each contribute to the 3-phosphoshikimate site. Residue Lys-22 coordinates phosphoenolpyruvate. Phosphoenolpyruvate is bound by residues Gly-96 and Arg-124. Positions 170, 171, 172, 198, 314, 337, and 341 each coordinate 3-phosphoshikimate. Gln-172 is a binding site for phosphoenolpyruvate. Residue Asp-314 is the Proton acceptor of the active site. Arg-345, Arg-387, and Lys-412 together coordinate phosphoenolpyruvate.

The protein belongs to the EPSP synthase family. Monomer.

It localises to the cytoplasm. It catalyses the reaction 3-phosphoshikimate + phosphoenolpyruvate = 5-O-(1-carboxyvinyl)-3-phosphoshikimate + phosphate. Its pathway is metabolic intermediate biosynthesis; chorismate biosynthesis; chorismate from D-erythrose 4-phosphate and phosphoenolpyruvate: step 6/7. Functionally, catalyzes the transfer of the enolpyruvyl moiety of phosphoenolpyruvate (PEP) to the 5-hydroxyl of shikimate-3-phosphate (S3P) to produce enolpyruvyl shikimate-3-phosphate and inorganic phosphate. The protein is 3-phosphoshikimate 1-carboxyvinyltransferase of Vibrio cholerae serotype O1 (strain ATCC 39541 / Classical Ogawa 395 / O395).